A 323-amino-acid chain; its full sequence is Formimidoylglutamase (323 aa).

Mn(2+) contacts are provided by His131, Asp157, His159, Asp161, Cys245, and Asp247.

It belongs to the arginase family. Requires Mn(2+) as cofactor.

It carries out the reaction N-formimidoyl-L-glutamate + H2O = formamide + L-glutamate. It functions in the pathway amino-acid degradation; L-histidine degradation into L-glutamate; L-glutamate from N-formimidoyl-L-glutamate (hydrolase route): step 1/1. Its function is as follows. Catalyzes the conversion of N-formimidoyl-L-glutamate to L-glutamate and formamide. This Geobacillus kaustophilus (strain HTA426) protein is Formimidoylglutamase.